A 232-amino-acid chain; its full sequence is Charged multivesicular body protein 4c (232 aa).

Disordered stretches follow at residues 1-23 (MSKL…PSAQ) and 177-232 (NKKM…AWAT). The segment at 1–153 (MSKLGKFFKG…EISEAFSQRV (153 aa)) is intramolecular interaction with C-terminus. 2 coiled-coil regions span residues 21–45 (SAQE…YLEN) and 125–185 (LNKI…SLEL). Residues 154–232 (QFADGFDEAE…DFKQLAAWAT (79 aa)) form an intramolecular interaction with N-terminus region. At Ser-210 the chain carries Phosphoserine; by AURKB.

This sequence belongs to the SNF7 family. In terms of assembly, probable core component of the endosomal sorting required for transport complex III (ESCRT-III). ESCRT-III components are thought to multimerize to form a flat lattice on the perimeter membrane of the endosome. Several assembly forms of ESCRT-III may exist that interact and act sequentially. Self-associates. Interacts with CHMP2A. Interacts with CHMP4A. Interacts with CHMP4B. Interacts with CHMP6. Interacts with VPS4A. Interacts with PDCD6IP; the interaction is direct. Post-translationally, phosphorylated at Ser-210 by AURKB during cytokinesis: together with ZFYVE19/ANCHR, phosphorylated CHMP4C retains abscission-competent VPS4 (VPS4A and/or VPS4B) at the midbody ring until abscission checkpoint signaling is terminated at late cytokinesis.

The protein resides in the cytoplasm. It is found in the cytosol. It localises to the late endosome membrane. Its subcellular location is the midbody. The protein localises to the midbody ring. Its function is as follows. Probable core component of the endosomal sorting required for transport complex III (ESCRT-III) which is involved in multivesicular bodies (MVBs) formation and sorting of endosomal cargo proteins into MVBs. MVBs contain intraluminal vesicles (ILVs) that are generated by invagination and scission from the limiting membrane of the endosome and mostly are delivered to lysosomes enabling degradation of membrane proteins, such as stimulated growth factor receptors, lysosomal enzymes and lipids. The MVB pathway appears to require the sequential function of ESCRT-O, -I,-II and -III complexes. ESCRT-III proteins mostly dissociate from the invaginating membrane before the ILV is released. The ESCRT machinery also functions in topologically equivalent membrane fission events, such as the terminal stages of cytokinesis. Key component of the cytokinesis checkpoint, a process required to delay abscission to prevent both premature resolution of intercellular chromosome bridges and accumulation of DNA damage: upon phosphorylation by AURKB, together with ZFYVE19/ANCHR, retains abscission-competent VPS4 (VPS4A and/or VPS4B) at the midbody ring until abscission checkpoint signaling is terminated at late cytokinesis. Deactivation of AURKB results in dephosphorylation of CHMP4C followed by its dissociation from ANCHR and VPS4 and subsequent abscission. ESCRT-III proteins are believed to mediate the necessary vesicle extrusion and/or membrane fission activities, possibly in conjunction with the AAA ATPase VPS4. CHMP4A/B/C are required for the exosomal release of SDCBP, CD63 and syndecan. The sequence is that of Charged multivesicular body protein 4c (Chmp4c) from Mus musculus (Mouse).